Consider the following 280-residue polypeptide: 2-dehydro-3-deoxyphosphooctonate aldolase (280 aa).

This sequence belongs to the KdsA family.

It localises to the cytoplasm. The catalysed reaction is D-arabinose 5-phosphate + phosphoenolpyruvate + H2O = 3-deoxy-alpha-D-manno-2-octulosonate-8-phosphate + phosphate. It functions in the pathway carbohydrate biosynthesis; 3-deoxy-D-manno-octulosonate biosynthesis; 3-deoxy-D-manno-octulosonate from D-ribulose 5-phosphate: step 2/3. It participates in bacterial outer membrane biogenesis; lipopolysaccharide biosynthesis. The protein is 2-dehydro-3-deoxyphosphooctonate aldolase of Thiobacillus denitrificans (strain ATCC 25259 / T1).